We begin with the raw amino-acid sequence, 73 residues long: Defensin-like protein 34 (73 aa).

Positions 1-25 are cleaved as a signal peptide; sequence MASNKVSFFLVLCLCVLSTAEFGEA. Disulfide bonds link Cys-33-Cys-59, Cys-45-Cys-68, and Cys-49-Cys-70.

Belongs to the DEFL family.

It localises to the secreted. The chain is Defensin-like protein 34 from Arabidopsis thaliana (Mouse-ear cress).